The sequence spans 127 residues: Large ribosomal subunit protein bL17 (127 aa).

This sequence belongs to the bacterial ribosomal protein bL17 family. As to quaternary structure, part of the 50S ribosomal subunit. Contacts protein L32.

The chain is Large ribosomal subunit protein bL17 from Legionella pneumophila (strain Lens).